A 499-amino-acid polypeptide reads, in one-letter code: Lysine--tRNA ligase (499 aa).

Residues E408 and E415 each coordinate Mg(2+).

The protein belongs to the class-II aminoacyl-tRNA synthetase family. In terms of assembly, homodimer. Mg(2+) is required as a cofactor.

It localises to the cytoplasm. It catalyses the reaction tRNA(Lys) + L-lysine + ATP = L-lysyl-tRNA(Lys) + AMP + diphosphate. This Bacillus cereus (strain AH820) protein is Lysine--tRNA ligase.